The chain runs to 279 residues: Large ribosomal subunit protein uL2 (279 aa).

Residues 222–279 form a disordered region; sequence GVAMNPVDHPHGGGEGRTSGGRHPVTPAGKPTKGAKTRVNKATDKFIIRSRHKAKKGR. Positions 269–279 are enriched in basic residues; the sequence is IRSRHKAKKGR.

Belongs to the universal ribosomal protein uL2 family. As to quaternary structure, part of the 50S ribosomal subunit. Forms a bridge to the 30S subunit in the 70S ribosome.

Functionally, one of the primary rRNA binding proteins. Required for association of the 30S and 50S subunits to form the 70S ribosome, for tRNA binding and peptide bond formation. It has been suggested to have peptidyltransferase activity; this is somewhat controversial. Makes several contacts with the 16S rRNA in the 70S ribosome. This is Large ribosomal subunit protein uL2 from Caulobacter vibrioides (strain ATCC 19089 / CIP 103742 / CB 15) (Caulobacter crescentus).